The sequence spans 178 residues: Cytochrome b6-f complex iron-sulfur subunit 2 (178 aa).

A helical membrane pass occupies residues 17 to 36 (LLNFFTGAIVATTASAAIYP). The 101-residue stretch at 61 to 161 (GHPIPASQIL…VQVKDDYIWI (101 aa)) folds into the Rieske domain. Residues cysteine 107, histidine 109, cysteine 125, and histidine 128 each coordinate [2Fe-2S] cluster. A disulfide bridge links cysteine 112 with cysteine 127.

Belongs to the Rieske iron-sulfur protein family. The 4 large subunits of the cytochrome b6-f complex are cytochrome b6, subunit IV (17 kDa polypeptide, PetD), cytochrome f and the Rieske protein, while the 4 small subunits are PetG, PetL, PetM and PetN. The complex functions as a dimer. [2Fe-2S] cluster is required as a cofactor.

It is found in the cellular thylakoid membrane. It carries out the reaction 2 oxidized [plastocyanin] + a plastoquinol + 2 H(+)(in) = 2 reduced [plastocyanin] + a plastoquinone + 4 H(+)(out). Functionally, component of the cytochrome b6-f complex, which mediates electron transfer between photosystem II (PSII) and photosystem I (PSI), cyclic electron flow around PSI, and state transitions. The protein is Cytochrome b6-f complex iron-sulfur subunit 2 of Nostoc sp. (strain PCC 7120 / SAG 25.82 / UTEX 2576).